The chain runs to 304 residues: Phosphoribosylaminoimidazole-succinocarboxamide synthase (304 aa).

Belongs to the SAICAR synthetase family.

The enzyme catalyses 5-amino-1-(5-phospho-D-ribosyl)imidazole-4-carboxylate + L-aspartate + ATP = (2S)-2-[5-amino-1-(5-phospho-beta-D-ribosyl)imidazole-4-carboxamido]succinate + ADP + phosphate + 2 H(+). The protein operates within purine metabolism; IMP biosynthesis via de novo pathway; 5-amino-1-(5-phospho-D-ribosyl)imidazole-4-carboxamide from 5-amino-1-(5-phospho-D-ribosyl)imidazole-4-carboxylate: step 1/2. In Komagataella pastoris (Yeast), this protein is Phosphoribosylaminoimidazole-succinocarboxamide synthase (ADE1).